A 366-amino-acid chain; its full sequence is Carbamoyl phosphate synthase small chain (366 aa).

Residues 1-171 (MLEKRYLVLE…KTPYVSTGSD (171 aa)) are CPSase. L-glutamine is bound by residues Ser-47, Gly-221, and Gly-223. In terms of domain architecture, Glutamine amidotransferase type-1 spans 173–360 (SVVLLDFGKK…ITMMKDFKEK (188 aa)). Residue Cys-248 is the Nucleophile of the active site. L-glutamine is bound by residues Leu-249, Gln-252, Asn-290, Gly-292, and Tyr-293. Residues His-333 and Glu-335 contribute to the active site.

This sequence belongs to the CarA family. As to quaternary structure, composed of two chains; the small (or glutamine) chain promotes the hydrolysis of glutamine to ammonia, which is used by the large (or ammonia) chain to synthesize carbamoyl phosphate. Tetramer of heterodimers (alpha,beta)4.

The enzyme catalyses hydrogencarbonate + L-glutamine + 2 ATP + H2O = carbamoyl phosphate + L-glutamate + 2 ADP + phosphate + 2 H(+). It catalyses the reaction L-glutamine + H2O = L-glutamate + NH4(+). The protein operates within amino-acid biosynthesis; L-arginine biosynthesis; carbamoyl phosphate from bicarbonate: step 1/1. Its pathway is pyrimidine metabolism; UMP biosynthesis via de novo pathway; (S)-dihydroorotate from bicarbonate: step 1/3. Small subunit of the glutamine-dependent carbamoyl phosphate synthetase (CPSase). CPSase catalyzes the formation of carbamoyl phosphate from the ammonia moiety of glutamine, carbonate, and phosphate donated by ATP, constituting the first step of 2 biosynthetic pathways, one leading to arginine and/or urea and the other to pyrimidine nucleotides. The small subunit (glutamine amidotransferase) binds and cleaves glutamine to supply the large subunit with the substrate ammonia. This chain is Carbamoyl phosphate synthase small chain, found in Staphylococcus epidermidis (strain ATCC 35984 / DSM 28319 / BCRC 17069 / CCUG 31568 / BM 3577 / RP62A).